The sequence spans 60 residues: Metallothionein (60 aa).

Positions 1–28 (MDPCECSKTGNCTCGGSCTCKNCSCTSC) are beta. A divalent metal cation contacts are provided by Cys4, Cys6, Cys12, Cys14, Cys18, Cys20, Cys23, Cys25, Cys28, Cys32, Cys33, Cys35, Cys36, Cys40, Cys43, Cys47, Cys49, Cys54, Cys58, and Cys59. The interval 29 to 60 (KKSCCSCCPSGCSKCASGCVCKGKTCDTSCCQ) is alpha.

It belongs to the metallothionein superfamily. Type 1 family.

Its function is as follows. Metallothioneins have a high content of cysteine residues that bind various heavy metals. In Gobiomorphus cotidianus (New Zealand common bully), this protein is Metallothionein (mt).